A 520-amino-acid polypeptide reads, in one-letter code: Rho GTPase-activating protein gacV (520 aa).

The chain crosses the membrane as a helical span at residues 8-28 (NIKTYYIIGIITLIFIVSAVI). Positions 28-192 (IKNQLSSSNQ…EEQEEEQFSM (165 aa)) form a coiled coil. 4 disordered regions span residues 33–73 (SSSN…KLDN), 121–189 (EEKQ…EEEQ), 348–373 (NNNNNNNNNNNNNNNNNNDNNNNNNE), and 489–520 (LQEQNDQEEDNQEEEKDNQEEDEDEEDKDQEE). Positions 52–62 (SKGRGNKKGKK) are enriched in basic residues. The span at 63 to 73 (PEKIQEKKLDN) shows a compositional bias: basic and acidic residues. Acidic residues predominate over residues 140-189 (QEEEEEEEEQQEIEEDEEEEEGQEQEEEEEQQEIEEGEEEQQEEEQEEEQ). The Rho-GAP domain occupies 195–472 (VSIERLMDFQ…ILLKQKKEIA (278 aa)). Over residues 348 to 372 (NNNNNNNNNNNNNNNNNNDNNNNNN) the composition is skewed to low complexity. Positions 480–520 (YFKDEYSKKLQEQNDQEEDNQEEEKDNQEEDEDEEDKDQEE) form a coiled coil. The segment covering 493–520 (NDQEEDNQEEEKDNQEEDEDEEDKDQEE) has biased composition (acidic residues).

It localises to the membrane. Functionally, rho GTPase-activating protein involved in the signal transduction pathway. This is Rho GTPase-activating protein gacV (gacV) from Dictyostelium discoideum (Social amoeba).